The primary structure comprises 419 residues: MDAYSLSPTDSTTYSSDTFSTEFHTDAIAPPGNTPGNYTLDYNECFFNFCECCPPEKGPMGPMGERGLPGPPGERGPLGLPGEKGETGLRGPPGPAGLPGANGLNGDIGEKGDQGPVGLPGVPGIPGKPGEKGDPGLKGDKGERGFSGLKGDPGERGEPGLNGTKGSIGREGPMGPGLAGTKGLKGEQGLKGECLQGEKGERGPPGLRGEMGLNGTDGVKGERGEPGPLGGKGDTGARGPPGPPGGRGMAGLRGEKGLKGVRGPRGPKGPPGESVEQIRSAFSVGLFPSRSFPPPSLPVKFDKVFYNGEGHWDPTLNKFNVTYPGVYLFSYHITVRNRPVRAALVVNGVRKLRTRDSLYGQDIDQASNLALLHLTDGDQVWLETLRDWNGXYSSSEDDSTFSGFLLYPDTKKPTAMENL.

The N-terminal stretch at 1–19 (MDAYSLSPTDSTTYSSDTF) is a signal peptide. A nonhelical region (NC2) region spans residues 20–57 (STEFHTDAIAPPGNTPGNYTLDYNECFFNFCECCPPEK). N-linked (GlcNAc...) asparagine glycosylation is present at Asn37. Residues 58 to 274 (GPMGPMGERG…RGPKGPPGES (217 aa)) are triple-helical region (COL1). The interval 63–275 (MGERGLPGPP…GPKGPPGESV (213 aa)) is disordered. Composition is skewed to basic and acidic residues over residues 129-144 (PGEK…KGER) and 184-202 (LKGE…KGER). The segment covering 227–236 (GPLGGKGDTG) has biased composition (gly residues). One can recognise a C1q domain in the interval 275 to 412 (VEQIRSAFSV…GFLLYPDTKK (138 aa)). The segment at 275–419 (VEQIRSAFSV…TKKPTAMENL (145 aa)) is nonhelical region (NC1). Asn320 carries N-linked (GlcNAc...) asparagine glycosylation.

Specialized secretory supporting cells at the outer perimeter of the saccular epithelium.

It localises to the secreted. Its subcellular location is the extracellular space. The protein resides in the extracellular matrix. Its function is as follows. Forms a microstructural matrix within the otolithic membrane. The protein is Inner ear-specific collagen of Lepomis macrochirus (Bluegill).